A 239-amino-acid chain; its full sequence is DNA repair protein RecO (239 aa).

It belongs to the RecO family.

Its function is as follows. Involved in DNA repair and RecF pathway recombination. The sequence is that of DNA repair protein RecO from Christiangramia forsetii (strain DSM 17595 / CGMCC 1.15422 / KT0803) (Gramella forsetii).